A 630-amino-acid polypeptide reads, in one-letter code: Sodium-dependent serotonin transporter (630 aa).

Topologically, residues methionine 1 to aspartate 87 are cytoplasmic. Residues glutamate 23–serine 60 are disordered. Polar residues predominate over residues serine 41–alanine 55. Tyrosine 47 is subject to Phosphotyrosine. The chain crosses the membrane as a helical span at residues phenylalanine 88–asparagine 112. Glycine 94, alanine 96, valine 97, aspartate 98, and asparagine 101 together coordinate Na(+). Aspartate 98 provides a ligand contact to serotonin. The Extracellular portion of the chain corresponds to glycine 113–glycine 115. A helical membrane pass occupies residues alanine 116–methionine 135. Topologically, residues glutamate 136 to glycine 160 are cytoplasmic. A Phosphotyrosine modification is found at tyrosine 142. Residues isoleucine 161–tyrosine 186 form a helical membrane-spanning segment. The Extracellular segment spans residues leucine 187–serine 252. Cysteine 200 and cysteine 209 are joined by a disulfide. N-linked (GlcNAc...) asparagine glycosylation is found at asparagine 208 and asparagine 217. A helical transmembrane segment spans residues tryptophan 253–tryptophan 271. Topologically, residues lysine 272–serine 277 are cytoplasmic. Threonine 276 bears the Phosphothreonine mark. Residues glycine 278–valine 297 form a helical membrane-spanning segment. At arginine 298–glycine 324 the chain is on the extracellular side. A helical membrane pass occupies residues valine 325–phenylalanine 347. Serine 336 lines the Na(+) pocket. At alanine 348 to aspartate 360 the chain is on the cytoplasmic side. The helical transmembrane segment at alanine 361–phenylalanine 380 threads the bilayer. Asparagine 368 serves as a coordination point for Na(+). Residues threonine 381–threonine 421 are Extracellular-facing. The helical transmembrane segment at phenylalanine 422–leucine 443 threads the bilayer. Na(+) is bound by residues leucine 434, aspartate 437, and serine 438. Threonine 439 is a serotonin binding site. Residues glutamate 444–glutamate 463 are Cytoplasmic-facing. The helical transmembrane segment at tryptophan 464–serine 483 threads the bilayer. The Extracellular portion of the chain corresponds to glycine 484–glutamate 494. Glutamate 494 and tyrosine 495 together coordinate serotonin. A helical membrane pass occupies residues tyrosine 495–tyrosine 516. The Cytoplasmic portion of the chain corresponds to glycine 517–arginine 538. A helical transmembrane segment spans residues isoleucine 539 to methionine 558. Phenylalanine 556 and serine 559 together coordinate serotonin. Over serine 559–serine 574 the chain is Extracellular. Residues isoleucine 575 to tyrosine 595 form a helical membrane-spanning segment. Over arginine 596–valine 630 the chain is Cytoplasmic. The tract at residues threonine 616 to aspartate 624 is interaction with RAB4A.

The protein belongs to the sodium:neurotransmitter symporter (SNF) (TC 2.A.22) family. SLC6A4 subfamily. As to quaternary structure, monomer or homooligomer. Interacts with TGFB1I1. Interacts with SEC23A, SEC24C and PATJ. Interacts with NOS1; the interaction may diminish the cell surface localization of SERT in the brain and, correspondingly, reduce serotonin reuptake. Interacts (via C-terminus) with SCAMP2; the interaction is direct and retains transporter molecules intracellularly. Interacts with filamentous actin and STX1A. Interacts (via the N-terminus) with STX1A (via the H3 domain); this interaction regulates SLC4A6 channel conductance. Interacts with ITGAV:ITGB3. Interacts (via C-terminus) with ITGB3; this interaction regulates SLC6A4 trafficking. In terms of processing, phosphorylation at Thr-276 increases 5-HT uptake and is required for cGMP-mediated SERT regulation. As to expression, expressed in the intestinal crypt epithelial cells and myenteric neurons of the small intestine (at protein level). Expressed in the brain.

The protein resides in the cell membrane. It is found in the endomembrane system. The protein localises to the endosome membrane. It localises to the synapse. Its subcellular location is the cell junction. The protein resides in the focal adhesion. It is found in the cell projection. The protein localises to the neuron projection. It carries out the reaction serotonin(out) + K(+)(in) + Na(+)(out) + H(+)(in) = serotonin(in) + K(+)(out) + Na(+)(in) + H(+)(out). Serotonin transporter that cotransports serotonin with one Na(+) ion in exchange for one K(+) ion and possibly one proton in an overall electroneutral transport cycle. Transports serotonin across the plasma membrane from the extracellular compartment to the cytosol thus limiting serotonin intercellular signaling. Essential for serotonin homeostasis in the central nervous system. In the developing somatosensory cortex, acts in glutamatergic neurons to control serotonin uptake and its trophic functions accounting for proper spatial organization of cortical neurons and elaboration of sensory circuits. In the mature cortex, acts primarily in brainstem raphe neurons to mediate serotonin uptake from the synaptic cleft back into the pre-synaptic terminal thus terminating serotonin signaling at the synapse. Modulates mucosal serotonin levels in the gastrointestinal tract through uptake and clearance of serotonin in enterocytes. Required for enteric neurogenesis and gastrointestinal reflexes. Regulates blood serotonin levels by ensuring rapid high affinity uptake of serotonin from plasma to platelets, where it is further stored in dense granules via vesicular monoamine transporters and then released upon stimulation. Mechanistically, the transport cycle starts with an outward-open conformation having Na1(+) and Cl(-) sites occupied. The binding of a second extracellular Na2(+) ion and serotonin substrate leads to structural changes to outward-occluded to inward-occluded to inward-open, where the Na2(+) ion and serotonin are released into the cytosol. Binding of intracellular K(+) ion induces conformational transitions to inward-occluded to outward-open and completes the cycle by releasing K(+) possibly together with a proton bound to Asp-98 into the extracellular compartment. Na1(+) and Cl(-) ions remain bound throughout the transport cycle. Additionally, displays serotonin-induced channel-like conductance for monovalent cations, mainly Na(+) ions. The channel activity is uncoupled from the transport cycle and may contribute to the membrane resting potential or excitability. This is Sodium-dependent serotonin transporter (Slc6a4) from Rattus norvegicus (Rat).